Reading from the N-terminus, the 2190-residue chain is Highly-reducing polyketide synthase 1 (2190 aa).

Residues 6-431 (LTPVAIVGYA…GANAHVVLGA (426 aa)) enclose the Ketosynthase family 3 (KS3) domain. Active-site for beta-ketoacyl synthase activity residues include cysteine 179, histidine 315, and histidine 355. The Malonyl-CoA:ACP transacylase (MAT) domain occupies 541–857 (FVFTGQGAQW…VSVLARGQNA (317 aa)). The segment at 925 to 1061 (NDLLGSLADW…GLVGVRNSPA (137 aa)) is N-terminal hotdog fold. One can recognise a PKS/mFAS DH domain in the interval 925–1246 (NDLLGSLADW…MTPLRESSGS (322 aa)). The Proton acceptor; for dehydratase activity role is filled by histidine 957. The interval 1089–1246 (TETVDVQAMY…MTPLRESSGS (158 aa)) is C-terminal hotdog fold. Residue aspartate 1154 is the Proton donor; for dehydratase activity of the active site. Residues 1494-1804 (GSLDSFYFVD…SGKSMGKLVI (311 aa)) enclose the Enoyl reductase (ER) domain. Residues 1828–2005 (ASYLIVGGTG…GTSLDLTAVS (178 aa)) enclose the Ketoreductase (KR) domain. A Carrier domain is found at 2107–2184 (KALEVLYGAL…ELAKLISKKS (78 aa)). Serine 2144 is subject to O-(pantetheine 4'-phosphoryl)serine.

It depends on pantetheine 4'-phosphate as a cofactor.

Its function is as follows. Highly-reducing polyketide synthase; part of the gene cluster that mediates the biosynthesis of liamocins, glycolipids (also called heavy oils) composed of a single mannitol or arabitol headgroup linked to either three, four or even six 3,5-dihydroxydecanoic ester tail-groups. Within the pathway, PKS1 is responsible for biosynthesis of 3,5-dihydroxydecanoic acid from acetyl-CoA and malonyl-CoA. A phosphopantetheine transferase (PPTase) activates the HR-PKS. The esterase EST1 then catalyzes ester bond formation between 3,5-dihydroxydecanoic acid and mannitol (provided by the mannitol-1-phosphate 5-dehydrogenase and the NADP-dependent mannitol dehydrogenase) or arabinol (provided by the L-arabinitol 4-dehydrogenase). The polypeptide is Highly-reducing polyketide synthase 1 (Aureobasidium melanogenum (Aureobasidium pullulans var. melanogenum)).